We begin with the raw amino-acid sequence, 132 residues long: ATP synthase epsilon chain, chloroplastic (132 aa).

It belongs to the ATPase epsilon chain family. F-type ATPases have 2 components, CF(1) - the catalytic core - and CF(0) - the membrane proton channel. CF(1) has five subunits: alpha(3), beta(3), gamma(1), delta(1), epsilon(1). CF(0) has three main subunits: a, b and c.

The protein localises to the plastid. Its subcellular location is the chloroplast thylakoid membrane. Functionally, produces ATP from ADP in the presence of a proton gradient across the membrane. In Calycanthus floridus var. glaucus (Eastern sweetshrub), this protein is ATP synthase epsilon chain, chloroplastic.